The sequence spans 169 residues: Vimentin-type intermediate filament-associated coiled-coil protein (169 aa).

Residues 7–89 (LQIREANAHL…VHSLQATVHQ (83 aa)) are a coiled coil. A compositionally biased stretch (low complexity) spans 126 to 135 (RLGPLPASDP). The interval 126–169 (RLGPLPASDPGHPPPGGPGPPLDNSTGEEADRDHLQPAVFGTTV) is disordered. Over residues 136-146 (GHPPPGGPGPP) the composition is skewed to pro residues.

The protein localises to the cytoplasm. This is Vimentin-type intermediate filament-associated coiled-coil protein (VMAC) from Homo sapiens (Human).